A 778-amino-acid chain; its full sequence is Exo-beta-D-glucosaminidase (778 aa).

Substrate-binding positions include Tyr-55, 104–105, 180–181, Glu-308, Glu-349, and Tyr-381; these read GE and DE. The Proton donor role is filled by Glu-181. The active-site Nucleophile is the Glu-349.

This sequence belongs to the glycosyl hydrolase 35 family. As to quaternary structure, homodimer.

Its subcellular location is the cytoplasm. The catalysed reaction is beta-D-glucosaminyl-(1-&gt;4)-N-acetyl-D-glucosamine + H2O = D-glucosamine + N-acetyl-D-glucosamine. It participates in glycan degradation; chitin degradation. Its function is as follows. Exo-type enzyme that specifically cleaves the non-reducing terminal glycosidic bond of chitooligosaccharides. Catalyzes the hydrolysis of GlcN-GlcNAc to glucosamine (GlcN) and N-acetylglucosamine (GlcNAc). Involved in chitin degradation. Can also hydrolyze chitosan and chitooligosaccharides of various chain lengths. The sequence is that of Exo-beta-D-glucosaminidase from Pyrococcus horikoshii (strain ATCC 700860 / DSM 12428 / JCM 9974 / NBRC 100139 / OT-3).